The sequence spans 412 residues: Isocitrate dehydrogenase [NADP] cytoplasmic (412 aa).

NADP(+)-binding positions include 76–78 (TIT) and R83. Residue T78 participates in substrate binding. Residues 95-101 (SPNGTIR), R110, and R133 each bind substrate. D253 provides a ligand contact to Mn(2+). Residue K261 coordinates NADP(+). Residue D276 coordinates Mn(2+). NADP(+) contacts are provided by residues 309 to 314 (GTVTRH) and N327.

Belongs to the isocitrate and isopropylmalate dehydrogenases family. In terms of assembly, homodimer. Mg(2+) serves as cofactor. Requires Mn(2+) as cofactor.

It is found in the cytoplasm. It carries out the reaction D-threo-isocitrate + NADP(+) = 2-oxoglutarate + CO2 + NADPH. This is Isocitrate dehydrogenase [NADP] cytoplasmic (idhC) from Dictyostelium discoideum (Social amoeba).